Reading from the N-terminus, the 585-residue chain is Potassium-transporting ATPase potassium-binding subunit (585 aa).

The next 12 membrane-spanning stretches (helical) occupy residues 25–45 (IIIFIYLGITSIFSYVLSFYI), 84–104 (YFINLLLFNFFAGLISFLVIM), 152–172 (FVITGLMFLSAGTGFAASMAF), 194–214 (IFDLILPLSILVTIILILAGV), 275–295 (LEFVSFTIIPLGSLMALGIVF), 307–327 (VIMFFFVFDGLFAFFGEYVGV), 345–365 (AIGVSQSSIFAVGATLTSTGA), 368–388 (GALVSYTPAGIIGVLIGLLLN), 397–417 (GVLNIFMYIIFTVFIGSLMVG), 437–457 (LSLVTHPLLVVIPLGITLMIP), 502–522 (LDGVIMLLGRYLLMGFQLVIA), and 547–567 (LLLISAMLIIGLLSYFPIIVL).

This sequence belongs to the KdpA family. The system is composed of three essential subunits: KdpA, KdpB and KdpC.

The protein resides in the cell membrane. Its function is as follows. Part of the high-affinity ATP-driven potassium transport (or Kdp) system, which catalyzes the hydrolysis of ATP coupled with the electrogenic transport of potassium into the cytoplasm. This subunit binds the extracellular potassium ions and delivers the ions to the membrane domain of KdpB through an intramembrane tunnel. The chain is Potassium-transporting ATPase potassium-binding subunit from Thermoplasma volcanium (strain ATCC 51530 / DSM 4299 / JCM 9571 / NBRC 15438 / GSS1).